The following is a 148-amino-acid chain: Putative nickel-responsive regulator (148 aa).

Residues histidine 88, histidine 99, histidine 101, and cysteine 107 each coordinate Ni(2+).

Belongs to the transcriptional regulatory CopG/NikR family. As to quaternary structure, homotetramer. Ni(2+) is required as a cofactor.

Its function is as follows. Transcriptional regulator. The chain is Putative nickel-responsive regulator from Helicobacter pylori (strain J99 / ATCC 700824) (Campylobacter pylori J99).